The sequence spans 361 residues: Peptide chain release factor 1 (361 aa).

The residue at position 235 (glutamine 235) is an N5-methylglutamine.

Belongs to the prokaryotic/mitochondrial release factor family. Methylated by PrmC. Methylation increases the termination efficiency of RF1.

The protein localises to the cytoplasm. Its function is as follows. Peptide chain release factor 1 directs the termination of translation in response to the peptide chain termination codons UAG and UAA. The polypeptide is Peptide chain release factor 1 (Rhodopseudomonas palustris (strain BisB18)).